The chain runs to 247 residues: TM2 domain-containing protein 3 (247 aa).

A signal peptide spans 1–29; it reads MAGGVLPLRGLRALCRVLLFLSQFCILSG. Topologically, residues 30 to 179 are extracellular; that stretch reads GEQSQALAQS…RTFPKMLYCN (150 aa). N-linked (GlcNAc...) asparagine glycans are attached at residues N87, N122, N140, N157, N169, and N179. Residues 180–200 form a helical membrane-spanning segment; it reads WTGGYKWSTALALSITLGGFG. The 48-residue stretch at 183 to 230 folds into the TM2 domain; sequence GYKWSTALALSITLGGFGADRFYLGQWREGLGKLFSFGGLGIWTLIDV. At 201–215 the chain is on the cytoplasmic side; that stretch reads ADRFYLGQWREGLGK. A helical transmembrane segment spans residues 216-236; that stretch reads LFSFGGLGIWTLIDVLLIGVG. Residues 237–247 are Extracellular-facing; it reads YVGPADGSLYI.

The protein belongs to the TM2 family. Widely expressed.

The protein resides in the membrane. Functionally, probable positive regulator of Notch signaling. The polypeptide is TM2 domain-containing protein 3 (TM2D3) (Homo sapiens (Human)).